Consider the following 95-residue polypeptide: Co-chaperonin GroES (95 aa).

Belongs to the GroES chaperonin family. As to quaternary structure, heptamer of 7 subunits arranged in a ring. Interacts with the chaperonin GroEL.

The protein resides in the cytoplasm. Its function is as follows. Together with the chaperonin GroEL, plays an essential role in assisting protein folding. The GroEL-GroES system forms a nano-cage that allows encapsulation of the non-native substrate proteins and provides a physical environment optimized to promote and accelerate protein folding. GroES binds to the apical surface of the GroEL ring, thereby capping the opening of the GroEL channel. The sequence is that of Co-chaperonin GroES from Streptococcus thermophilus (strain ATCC BAA-491 / LMD-9).